Here is a 244-residue protein sequence, read N- to C-terminus: Serine-rich single-pass membrane protein 1 (244 aa).

A helical membrane pass occupies residues Cys35–Phe55. Disordered stretches follow at residues Asp65–Asn114, Gln126–Tyr191, and Leu210–Phe244. Positions Ala80 to Ala94 are enriched in basic and acidic residues. Composition is skewed to polar residues over residues Asp96 to Asn114 and Gln132 to Gln142. Residues Ser161–Ile176 show a composition bias toward basic and acidic residues.

Its subcellular location is the membrane. The polypeptide is Serine-rich single-pass membrane protein 1 (SSMEM1) (Homo sapiens (Human)).